Reading from the N-terminus, the 611-residue chain is MAIQVLPPQLANQIAAGEVVERPASVVKELVENSLDAGATRIDIDIEKGGAKLIRIRDNGCGIAKDELAMALARHATSKITSLDDLEAIISLGFRGEALASISSVSRLTLTSRTEAQTEAWQAYAEGRDQAVTVKPAAHPVGTTLEVLDLFYNTPARRKFMRTEKTEFTHIDEIIRRIALVRFDVAISLTHNGKLVRQYRAVSDDGQRERRLGAICGTAFLSHALKIDWQHGELSLHGWVADPSGSKALSELQYCYVNGRMMRDRLINHAIRQAYEDKLGDRHQPAYVLYLEIDPHQVDVNVHPAKHEVRFHQSRLVHDFIYQGVVSVLQESGAETLPEIATAQPAERWQPENRQAAGGNHFATPAPAAAPRPASTASSSWQRQEPVYQKREGAAYQQLLQTPTRSEEPPLSPASVTQNDAPALSAHAQSFGRVLTIVREQYALLEGKKGLALLALTVAERWLKQAQLEPGSEGLRPQPLLIPVRLKLDKAERDAGNRCSELLNQMGIDLKFDAHHVMLRAVPLPLRQQNLQNLIPEMLGYLAQHQDVTAFQLAQWFARQSASEHQHWNHSQAITLLAEVERLCPTLVKSPPSGLLQNVDIEMAMNALKHE.

The disordered stretch occupies residues N353–V387. A compositionally biased stretch (low complexity) spans A363–S380.

Belongs to the DNA mismatch repair MutL/HexB family.

In terms of biological role, this protein is involved in the repair of mismatches in DNA. It is required for dam-dependent methyl-directed DNA mismatch repair. May act as a 'molecular matchmaker', a protein that promotes the formation of a stable complex between two or more DNA-binding proteins in an ATP-dependent manner without itself being part of a final effector complex. This is DNA mismatch repair protein MutL from Erwinia tasmaniensis (strain DSM 17950 / CFBP 7177 / CIP 109463 / NCPPB 4357 / Et1/99).